The following is a 517-amino-acid chain: Peptide chain release factor 3 (517 aa).

The tr-type G domain occupies Ala9–Arg269. Residues Ser18 to Thr25, Asp86 to His90, and Asn140 to Asp143 each bind GTP.

Belongs to the TRAFAC class translation factor GTPase superfamily. Classic translation factor GTPase family. PrfC subfamily.

It is found in the cytoplasm. Increases the formation of ribosomal termination complexes and stimulates activities of RF-1 and RF-2. It binds guanine nucleotides and has strong preference for UGA stop codons. It may interact directly with the ribosome. The stimulation of RF-1 and RF-2 is significantly reduced by GTP and GDP, but not by GMP. This chain is Peptide chain release factor 3, found in Halorhodospira halophila (strain DSM 244 / SL1) (Ectothiorhodospira halophila (strain DSM 244 / SL1)).